Here is a 332-residue protein sequence, read N- to C-terminus: Ubiquinone biosynthesis protein COQ4, mitochondrial (332 aa).

A mitochondrion-targeting transit peptide spans 1-24; sequence MLRLGVSRTPINRQFVGYEQRRHF. The Zn(2+) site is built by H210, D211, H214, and E226.

Belongs to the COQ4 family. As to quaternary structure, component of a multi-subunit COQ enzyme complex, composed of at least COQ3, COQ4, COQ5, COQ6, COQ7 and COQ9. It depends on Zn(2+) as a cofactor.

It localises to the mitochondrion inner membrane. The catalysed reaction is a 4-hydroxy-3-methoxy-5-(all-trans-polyprenyl)benzoate + H(+) = a 2-methoxy-6-(all-trans-polyprenyl)phenol + CO2. Its pathway is cofactor biosynthesis; ubiquinone biosynthesis. Its function is as follows. Lyase that catalyzes the C1-decarboxylation of 4-hydroxy-3-methoxy-5-(all-trans-polyprenyl)benzoic acid into 2-methoxy-6-(all-trans-polyprenyl)phenol during ubiquinone biosynthesis. This chain is Ubiquinone biosynthesis protein COQ4, mitochondrial, found in Zygosaccharomyces rouxii (strain ATCC 2623 / CBS 732 / NBRC 1130 / NCYC 568 / NRRL Y-229).